The sequence spans 70 residues: Bowman-Birk type proteinase inhibitor A-II (70 aa).

Cystine bridges form between C11–C68, C12–C29, C15–C63, C17–C27, C36–C43, C40–C55, and C45–C53.

This sequence belongs to the Bowman-Birk serine protease inhibitor family.

Its function is as follows. These proteins inhibit trypsin and chymotrypsin, having 2 sites of interaction with trypsin. The site of interaction with chymotrypsin has not been determined but is not independent of the trypsin-reactive sites. The polypeptide is Bowman-Birk type proteinase inhibitor A-II (Arachis hypogaea (Peanut)).